We begin with the raw amino-acid sequence, 249 residues long: uncharacterized protein (249 aa).

Residues 3 to 23 (WYWIGLLIVVVLFLLSAVRIV) form a helical membrane-spanning segment.

This sequence belongs to the band 7/mec-2 family.

It is found in the membrane. This is an uncharacterized protein from Archaeoglobus fulgidus (strain ATCC 49558 / DSM 4304 / JCM 9628 / NBRC 100126 / VC-16).